An 835-amino-acid chain; its full sequence is Outer membrane usher protein FasD (835 aa).

Residues 1–21 (MNKYPPLLTMLIIGIGSNAVA) form the signal peptide. A disulfide bond links Cys-810 and Cys-834.

This sequence belongs to the fimbrial export usher family.

It localises to the cell outer membrane. In terms of biological role, involved in the export and assembly of the 987P fimbriae subunits across the outer membrane. This chain is Outer membrane usher protein FasD (fasD), found in Escherichia coli.